The sequence spans 443 residues: ATP-dependent protease ATPase subunit HslU (443 aa).

Residues isoleucine 18, 60–65 (GVGKTE), aspartate 256, glutamate 321, and arginine 393 contribute to the ATP site.

The protein belongs to the ClpX chaperone family. HslU subfamily. As to quaternary structure, a double ring-shaped homohexamer of HslV is capped on each side by a ring-shaped HslU homohexamer. The assembly of the HslU/HslV complex is dependent on binding of ATP.

Its subcellular location is the cytoplasm. In terms of biological role, ATPase subunit of a proteasome-like degradation complex; this subunit has chaperone activity. The binding of ATP and its subsequent hydrolysis by HslU are essential for unfolding of protein substrates subsequently hydrolyzed by HslV. HslU recognizes the N-terminal part of its protein substrates and unfolds these before they are guided to HslV for hydrolysis. The polypeptide is ATP-dependent protease ATPase subunit HslU (Pectobacterium atrosepticum (strain SCRI 1043 / ATCC BAA-672) (Erwinia carotovora subsp. atroseptica)).